Reading from the N-terminus, the 493-residue chain is Protein dml1 (493 aa).

This sequence belongs to the misato family.

Its subcellular location is the mitochondrion. Involved in the partitioning of the mitochondrial organelle and mitochondrial DNA (mtDNA) inheritance. The sequence is that of Protein dml1 (dml1) from Aspergillus oryzae (strain ATCC 42149 / RIB 40) (Yellow koji mold).